The chain runs to 447 residues: Glutamate--tRNA ligase 1 (447 aa).

The short motif at 10-20 (PSPTGMLHVGN) is the 'HIGH' region element. Positions 240-244 (KISKR) match the 'KMSKS' region motif. Lys243 serves as a coordination point for ATP.

Belongs to the class-I aminoacyl-tRNA synthetase family. Glutamate--tRNA ligase type 1 subfamily. In terms of assembly, monomer.

The protein resides in the cytoplasm. It carries out the reaction tRNA(Glu) + L-glutamate + ATP = L-glutamyl-tRNA(Glu) + AMP + diphosphate. In terms of biological role, catalyzes the attachment of glutamate to tRNA(Glu) in a two-step reaction: glutamate is first activated by ATP to form Glu-AMP and then transferred to the acceptor end of tRNA(Glu). This Rickettsia rickettsii (strain Sheila Smith) protein is Glutamate--tRNA ligase 1.